A 357-amino-acid chain; its full sequence is Gas vesicle ATPase GvpN (357 aa).

Over residues 22-36 (ATSASKNGGRTTPSA) the composition is skewed to polar residues. Residues 22-43 (ATSASKNGGRTTPSALTPRPRS) are disordered. 72 to 79 (GPAGTGKT) provides a ligand contact to ATP.

Belongs to the CbbQ/NirQ/NorQ/GpvN family. In terms of assembly, forms homodimers, probably interacts with other GV proteins including GvpA.

It localises to the gas vesicle. It is found in the cytoplasm. The enzyme catalyses ATP + H2O = ADP + phosphate + H(+). Its function is as follows. An ATPase that functions in gas vesicle formation. A minor component of the gas vesicle, also found in soluble extracts. Gas vesicles (GV) are hollow, gas filled proteinaceous nanostructures. During planktonic growth they allow positioning of the organism at a favorable depth for light or nutrient acquisition. This Ancylobacter aquaticus protein is Gas vesicle ATPase GvpN.